A 123-amino-acid polypeptide reads, in one-letter code: MAFPTTSAQQADTTRKILEEIQTKKQLLAGGIINLGINTQMSTPQLLGQPTTVTPDFQLGVGGVAANATPTARAAFNPTSSTTLGFFVPQDSYFGNSFLPVLPRLEPLPSSIATPPATPINNK.

The protein belongs to the SOSS-C family.

The protein is SOSS complex subunit C homolog of Drosophila ananassae (Fruit fly).